The sequence spans 498 residues: Glycerol kinase (498 aa).

Position 14 (Thr-14) interacts with ADP. Residues Thr-14 and Thr-15 each coordinate ATP. Sn-glycerol 3-phosphate is bound at residue Thr-14. Arg-18 serves as a coordination point for ADP. Arg-84, Glu-85, Tyr-136, and Asp-246 together coordinate sn-glycerol 3-phosphate. Arg-84, Glu-85, Tyr-136, Asp-246, and Gln-247 together coordinate glycerol. Residues Thr-268 and Gly-311 each contribute to the ADP site. The ATP site is built by Thr-268, Gly-311, Gln-315, and Gly-412. Residues Gly-412 and Asn-416 each contribute to the ADP site.

Belongs to the FGGY kinase family.

It catalyses the reaction glycerol + ATP = sn-glycerol 3-phosphate + ADP + H(+). It participates in polyol metabolism; glycerol degradation via glycerol kinase pathway; sn-glycerol 3-phosphate from glycerol: step 1/1. Its activity is regulated as follows. Inhibited by fructose 1,6-bisphosphate (FBP). Its function is as follows. Key enzyme in the regulation of glycerol uptake and metabolism. Catalyzes the phosphorylation of glycerol to yield sn-glycerol 3-phosphate. The polypeptide is Glycerol kinase (Leptospira biflexa serovar Patoc (strain Patoc 1 / Ames)).